Reading from the N-terminus, the 205-residue chain is Thymidylate kinase (205 aa).

An ATP-binding site is contributed by 11–18 (GLDKSGKT).

This sequence belongs to the thymidylate kinase family. Homodimer; the dimer arrangement is orthogonal and not antiparallel as in human enzyme.

The enzyme catalyses dTMP + ATP = dTDP + ADP. It functions in the pathway pyrimidine metabolism; dTTP biosynthesis. In terms of biological role, poxvirus TMP kinase is able to phosphorylate dTMP, dUMP and also dGMP from any purine and pyrimidine nucleoside triphosphate. The large substrate specificity is explained by the presence of a canal connecting the edge of the dimer interface to the TMP base binding pocket, canal not found in the human homolog. The sequence is that of Thymidylate kinase (OPG178) from Homo sapiens (Human).